A 165-amino-acid polypeptide reads, in one-letter code: V-type proton ATPase 16 kDa proteolipid subunit (165 aa).

Residues 1–10 (MSSTFSGDET) lie on the Lumenal side of the membrane. Residues 11 to 33 (APFFGFLGAAAALVFSCMGAAYG) form a helical membrane-spanning segment. Residues 34 to 55 (TAKSGVGVASMGVMRPELVMKS) are Cytoplasmic-facing. The helical transmembrane segment at 56 to 76 (IVPVVMAGVLGIYGLIIAVII) threads the bilayer. Over 77–95 (STGINPKAKSYYLFDGYAH) the chain is Lumenal. A helical membrane pass occupies residues 96 to 117 (LSSGLACGLAGLSAGMAIGIVG). The Cytoplasmic segment spans residues 118 to 129 (DAGVRANAQQPK). The chain crosses the membrane as a helical span at residues 130 to 155 (LFVGMILILIFAEALALYGLIVGIIL). Residues 156-165 (SSRAGQSRAE) lie on the Lumenal side of the membrane.

The protein belongs to the V-ATPase proteolipid subunit family. As to quaternary structure, V-ATPase is a heteromultimeric enzyme composed of a peripheral catalytic V1 complex (main components: subunits A, B, C, D, E, and F) attached to an integral membrane V0 proton pore complex (main component: the proteolipid protein; which is present as a hexamer that forms the proton-conducting pore).

The protein resides in the vacuole membrane. Proton-conducting pore forming subunit of the membrane integral V0 complex of vacuolar ATPase. V-ATPase is responsible for acidifying a variety of intracellular compartments in eukaryotic cells. This Gossypium hirsutum (Upland cotton) protein is V-type proton ATPase 16 kDa proteolipid subunit (CVA16-2).